The chain runs to 173 residues: MWYKVLGIVSLCSVYVSTQGSNLQCKIAGGGELIPIRTPEYRAWVPLGEVGLNVSDSKVLIFAARSCFGAHILLQNNAEDFKNAVYEIVIGGMKNTRSGIRQCVGCKFDEWVKDKALNCRFFNYFWISWCGDEVWVGHGYRPPHNRILRYKYENQPVINAASVRSESDTYWAL.

An N-terminal signal peptide occupies residues 1–20; that stretch reads MWYKVLGIVSLCSVYVSTQG. N-linked (GlcNAc...) asparagine glycosylation is present at N53.

In terms of tissue distribution, component of the acid-insoluble organic matrix of calcified shell layers (at protein level).

It is found in the secreted. This is an uncharacterized protein from Haliotis asinina (Donkey's ear abalone).